A 300-amino-acid chain; its full sequence is Tegument protein VP22 (300 aa).

Residues 1–148 (MTSRRSVKSC…PARGRRPAQA (148 aa)) form a disordered region. Composition is skewed to basic and acidic residues over residues 10-22 (CPREAPRGTHEEL) and 50-61 (PRGEVRFLHYDE). A Nuclear localization signal motif is present at residues 163 to 166 (GRTK). Residues 174–267 (KKLHFSTAPP…LVNPDAAQDV (94 aa)) are interaction with gE. A Nuclear export signal motif is present at residues 232-244 (LNELLDLTTIRVT). Over residues 269 to 292 (ATAAARGRPAGRAAATARAPARSA) the composition is skewed to low complexity. The disordered stretch occupies residues 269-300 (ATAAARGRPAGRAAATARAPARSASRPRRPLE).

It belongs to the alphaherpesvirinae VP22 tegument protein family. As to quaternary structure, interacts with gE (via C-terminus); this interaction is necessary for the recruitment of VP22 to the Golgi and its packaging into virions. Interacts with gM (via C-terminus). Interacts with VP16; this interaction allows the formation of a tripartite complex composed of VP16, VP22 and UL41/VHS. Interacts with the capsid-binding protein UL16. Interacts with host CGAS. Highly phosphorylated in the host cell. Packaging is selective for underphosphorylated forms.

It is found in the virion tegument. The protein localises to the host cytoplasm. Its subcellular location is the host nucleus. It localises to the host Golgi apparatus. Functionally, tegument protein that plays different roles during the time course of infection. Participates in both the accumulation of viral mRNAs and viral protein translation at late time of infection. Modulates the RNase activity of the virion host shutoff protein UL41 probably to ensure necessary levels of key cellular mRNAs and proteins. Plays a role in microtubule reorganization that occurs after viral infection by stabilizing microtubule network. Plays a role in the inhibition of host innate immune system by targeting the CGAS enzymatic activity which is the principal cytosolic DNA sensor that detects invading viral DNA. Acts by mediating disruption of liquid-like droplets in which CGAS is activated, thereby preventing CGAS activity. This Homo sapiens (Human) protein is Tegument protein VP22.